The chain runs to 542 residues: Chaperonin GroEL 3 (542 aa).

ATP is bound by residues 30–33 (TLGP), Lys-51, 87–91 (DGTTT), Gly-415, and Asp-496.

It belongs to the chaperonin (HSP60) family. Forms a cylinder of 14 subunits composed of two heptameric rings stacked back-to-back. Interacts with the co-chaperonin GroES.

The protein localises to the cytoplasm. It carries out the reaction ATP + H2O + a folded polypeptide = ADP + phosphate + an unfolded polypeptide.. In terms of biological role, together with its co-chaperonin GroES, plays an essential role in assisting protein folding. The GroEL-GroES system forms a nano-cage that allows encapsulation of the non-native substrate proteins and provides a physical environment optimized to promote and accelerate protein folding. This Rhizobium johnstonii (strain DSM 114642 / LMG 32736 / 3841) (Rhizobium leguminosarum bv. viciae) protein is Chaperonin GroEL 3.